The following is a 36-amino-acid chain: Photosystem I reaction center subunit VIII (36 aa).

The chain crosses the membrane as a helical span at residues 8 to 28 (AILVPIVGLVFPALSMALFFI).

This sequence belongs to the PsaI family.

It is found in the plastid. The protein resides in the chloroplast thylakoid membrane. Its function is as follows. May help in the organization of the PsaL subunit. This Phaeodactylum tricornutum (strain CCAP 1055/1) protein is Photosystem I reaction center subunit VIII.